The primary structure comprises 465 residues: Cysteine--tRNA ligase (465 aa).

Cys-30 is a binding site for Zn(2+). Residues 32 to 42 carry the 'HIGH' region motif; sequence PTVYDRAHLGN. Residues Cys-213, His-238, and Glu-242 each contribute to the Zn(2+) site. Residues 271-275 carry the 'KMSKS' region motif; sequence KMSKS. Lys-274 contributes to the ATP binding site.

It belongs to the class-I aminoacyl-tRNA synthetase family. As to quaternary structure, monomer. Zn(2+) is required as a cofactor.

Its subcellular location is the cytoplasm. The catalysed reaction is tRNA(Cys) + L-cysteine + ATP = L-cysteinyl-tRNA(Cys) + AMP + diphosphate. In Ruegeria pomeroyi (strain ATCC 700808 / DSM 15171 / DSS-3) (Silicibacter pomeroyi), this protein is Cysteine--tRNA ligase.